The sequence spans 1827 residues: MTSLAERAAQLSPNARAALARELVRAGTTFPTDICEPVAVVGIGCRFPGNVTGPESFWQLLADGVDTIEQVPPDRWDADAFYDPDPSASGRMTTKWGGFVSDVDAFDADFFGITPREAVAMDPQHRMLLEVAWEALEHAGIPPDSLSGTRTGVMMGLSSWDYTIVNIERRADIDAYLSTGTPHCAAVGRIAYLLGLRGPAVAVDTACSSSLVAIHLACQSLRLRETDVALAGGVQLTLSPFTAIALSKWSALSPTGRCNSFDANADGFVRGEGCGVVVLKRLADAVRDQDRVLAVVRGSATNSDGRSNGMTAPNALAQRDVITSALKLADVTPDSVNYVETHGTGTVLGDPIEFESLAATYGLGKGQGESPCALGSVKTNIGHLEAAAGVAGFIKAVLAVQRGHIPRNLHFTRWNPAIDASATRLFVPTESAPWPAAAGPRRAAVSSFGLSGTNAHVVVEQAPDTAVAAAGGMPYVSALNVSGKTAARVASAAAVLADWMSGPGAAAPLADVAHTLNRHRARHAKFATVIARDRAEAIAGLRALAAGQPRVGVVDCDQHAGGPGRVFVYSGQGSQWASMGQQLLANEPAFAKAVAELDPIFVDQVGFSLQQTLIDGDEVVGIDRIQPVLVGMQLALTELWRSYGVIPDAVIGHSMGEVSAAVVAGALTPEQGLRVITTRSRLMARLSGQGAMALLELDADAAEALIAGYPQVTLAVHASPRQTVIAGPPEQVDTVIAAVATQNRLARRVEVDVASHHPIIDPILPELRSALADLTPQPPSIPIISTTYESAQPVADADYWSANLRNPVRFHQAVTAAGVDHNTFIEISPHPVLTHALTDTLDPDGSHTVMSTMNRELDQTLYFHAQLAAVGVAASEHTTGRLVDLPPTPWHHQRFWVTDRSAMSELAATHPLLGAHIEMPRNGDHVWQTDVGTEVCPWLADHKVFGQPIMPAAGFAEIALAAASEALGTAADAVAPNIVINQFEVEQMLPLDGHTPLTTQLIRGGDSQIRVEIYSRTRGGEFCRHATAKVEQSPRECAHAHPEAQGPATGTTVSPADFYALLRQTGQHHGPAFAALSRIVRLADGSAETEISIPDEAPRHPGYRLHPVVLDAALQSVGAAIPDGEIAGSAEASYLPVSFETIRVYRDIGRHVRCRAHLTNLDGGTGKMGRIVLINDAGHIAAEVDGIYLRRVERRAVPLPLEQKIFDAEWTESPIAAVPAPEPAAETTRGSWLVLADATVDAPGKAQAKSMADDFVQQWRSPMRRVHTADIHDESAVLAAFAETAGDPEHPPVGVVVFVGGASSRLDDELAAARDTVWSITTVVRAVVGTWHGRSPRLWLVTGGGLSVADDEPGTPAAASLKGLVRVLAFEHPDMRTTLVDLDITQDPLTALSAELRNAGSGSRHDDVIAWRGERRFVERLSRATIDVSKGHPVVRQGASYVVTGGLGGLGLVVARWLVDRGAGRVVLGGRSDPTDEQCNVLAELQTRAEIVVVRGDVASPGVAEKLIETARQSGGQLRGVVHAAAVIEDSLVFSMSRDNLERVWAPKATGALRMHEATADCELDWWLGFSSAASLLGSPGQAAYACASAWLDALVGWRRASGLPAAVINWGPWSEVGVAQALVGSVLDTISVAEGIEALDSLLAADRIRTGVARLRADRALVAFPEIRSISYFTQVVEELDSAGDLGDWGGPDALADLDPGEARRAVTERMCARIAAVMGYTDQSTVEPAVPLDKPLTELGLDSLMAVRIRNGARADFGVEPPVALILQGASLHDLTADLMRQLGLNDPDPALNNADTIRDRARQRAAARHGAAMRRRPKPEVQGG.

The region spanning Cys35 to Gln461 is the Ketosynthase family 3 (KS3) domain. Catalysis depends on for beta-ketoacyl synthase activity residues Cys207, His342, and His383. The acyltransferase stretch occupies residues Val566–Glu876. The For malonyltransferase activity role is filled by Ser654. The segment at His910–Cys1037 is N-terminal hotdog fold. Residues His910 to Leu1076 form a dehydratase region. The PKS/mFAS DH domain maps to His910–Pro1198. Residue His942 is the Proton acceptor; for dehydratase activity of the active site. Residues Gly1050–Pro1198 form a C-terminal hotdog fold region. Asp1111 acts as the Proton donor; for dehydratase activity in catalysis. A beta-ketoacyl reductase region spans residues Ala1439–Val1617. Ser1440–Leu1485 lines the NADP(+) pocket. Residues Arg1706–Leu1785 enclose the Carrier domain. Residue Ser1745 is modified to O-(pantetheine 4'-phosphoryl)serine. Residues Arg1807–Pro1820 show a composition bias toward basic residues. Positions Arg1807–Gly1827 are disordered.

The cofactor is NADP(+). Pantetheine 4'-phosphate serves as cofactor.

It carries out the reaction icosanoyl-[(phenol)carboxyphthiodiolenone synthase] + 2 (S)-methylmalonyl-CoA + 3 malonyl-CoA + 5 NADPH + 10 H(+) = C32-carboxyphthiodiolenone-[(phenol)carboxyphthiodiolenone synthase] + 5 CO2 + 5 NADP(+) + 5 CoA + 2 H2O. The enzyme catalyses docosanoyl-[(phenol)carboxyphthiodiolenone synthase] + 2 (S)-methylmalonyl-CoA + 3 malonyl-CoA + 5 NADPH + 10 H(+) = C34-carboxyphthiodiolenone-[(phenol)carboxyphthiodiolenone synthase] + 5 CO2 + 5 NADP(+) + 5 CoA + 2 H2O. It catalyses the reaction 17-(4-hydroxyphenyl)heptadecanoyl-[(phenol)carboxyphthiodiolenone synthase] + 2 (S)-methylmalonyl-CoA + 3 malonyl-CoA + 5 NADPH + 10 H(+) = C35-(phenol)carboxyphthiodiolenone-[(phenol)carboxyphthiodiolenone synthase] + 5 CO2 + 5 NADP(+) + 5 CoA + 2 H2O. The catalysed reaction is 19-(4-hydroxyphenyl)nonadecanoyl-[(phenol)carboxyphthiodiolenone synthase] + 2 (S)-methylmalonyl-CoA + 3 malonyl-CoA + 5 NADPH + 10 H(+) = C37-(phenol)carboxyphthiodiolenone-[(phenol)carboxyphthiodiolenone synthase] + 5 CO2 + 5 NADP(+) + 5 CoA + 2 H2O. The protein operates within lipid metabolism; fatty acid biosynthesis. In terms of biological role, part of the PpsABCDE complex involved in the biosynthesis of the lipid core common to phthiocerols and phenolphthiocerols by successive additions of malonyl-CoA or methylmalonyl-CoA extender units. PpsA can accept as substrate the activated forms of either icosanoyl (C20), docosanoyl (C22) or lignoceroyl (C24) groups from FadD26, or a (4-hydroxyphenyl)-C17 or (4-hydroxyphenyl)-C19 fatty acyl from FadD29. PpsA initiates the biosynthesis and extends its substrate using a malonyl-CoA extender unit. The PpsB and PpsC proteins add the second and third malonyl-CoA extender units. PpsD adds an (R)-methylmalonyl unit and PpsE adds a second (R)-methylmalonyl unit. The incorporation of the methylmalonyl units results in formation of two branched methyl groups in the elongated product. This chain is Phenolphthiocerol/phthiocerol polyketide synthase subunit C (ppsD), found in Mycobacterium tuberculosis (strain CDC 1551 / Oshkosh).